We begin with the raw amino-acid sequence, 371 residues long: Bifunctional enzyme IspD/IspF (371 aa).

The 2-C-methyl-D-erythritol 4-phosphate cytidylyltransferase stretch occupies residues 1–210; it reads MSEISLIMLA…LDLPTPSFEI (210 aa). Residues 211–371 form a 2-C-methyl-D-erythritol 2,4-cyclodiphosphate synthase region; it reads FTGNGFDVHE…NLKYFDWTRL (161 aa). A divalent metal cation-binding residues include aspartate 217 and histidine 219. Residues 217-219 and 243-244 contribute to the 4-CDP-2-C-methyl-D-erythritol 2-phosphate site; these read DVH and HS. Histidine 251 serves as a coordination point for a divalent metal cation. 4-CDP-2-C-methyl-D-erythritol 2-phosphate-binding positions include 265 to 267, 270 to 274, 341 to 344, phenylalanine 348, and arginine 351; these read DIG, YPDTD, and TTTE.

The protein in the N-terminal section; belongs to the IspD/TarI cytidylyltransferase family. IspD subfamily. It in the C-terminal section; belongs to the IspF family. It depends on a divalent metal cation as a cofactor.

The enzyme catalyses 2-C-methyl-D-erythritol 4-phosphate + CTP + H(+) = 4-CDP-2-C-methyl-D-erythritol + diphosphate. The catalysed reaction is 4-CDP-2-C-methyl-D-erythritol 2-phosphate = 2-C-methyl-D-erythritol 2,4-cyclic diphosphate + CMP. It functions in the pathway isoprenoid biosynthesis; isopentenyl diphosphate biosynthesis via DXP pathway; isopentenyl diphosphate from 1-deoxy-D-xylulose 5-phosphate: step 2/6. Its pathway is isoprenoid biosynthesis; isopentenyl diphosphate biosynthesis via DXP pathway; isopentenyl diphosphate from 1-deoxy-D-xylulose 5-phosphate: step 4/6. Functionally, bifunctional enzyme that catalyzes the formation of 4-diphosphocytidyl-2-C-methyl-D-erythritol from CTP and 2-C-methyl-D-erythritol 4-phosphate (MEP) (IspD), and catalyzes the conversion of 4-diphosphocytidyl-2-C-methyl-D-erythritol 2-phosphate (CDP-ME2P) to 2-C-methyl-D-erythritol 2,4-cyclodiphosphate (ME-CPP) with a corresponding release of cytidine 5-monophosphate (CMP) (IspF). The sequence is that of Bifunctional enzyme IspD/IspF from Campylobacter jejuni subsp. jejuni serotype O:6 (strain 81116 / NCTC 11828).